The following is a 105-amino-acid chain: Thioredoxin (105 aa).

The Thioredoxin domain maps to 2 to 105; sequence VKQIESKSAF…KLEATINELL (104 aa). The residue at position 3 (Lys-3) is an N6-acetyllysine. N6-succinyllysine is present on Lys-8. Catalysis depends on nucleophile residues Cys-32 and Cys-35. Cys-32 and Cys-35 are disulfide-bonded. Lys-39 carries the post-translational modification N6-acetyllysine. 2 positions are modified to S-nitrosocysteine: Cys-62 and Cys-69. Cys-73 carries the S-nitrosocysteine; alternate modification. Lys-94 carries the post-translational modification N6-acetyllysine; alternate. Lys-94 carries the post-translational modification N6-succinyllysine; alternate.

This sequence belongs to the thioredoxin family. Homodimer; disulfide-linked. Interacts with TXNIP through the redox-active site. Interacts with MAP3K5 and CASP3. Interacts with APEX1; the interaction stimulates the FOS/JUN AP-1 DNA-binding activity in a redox-dependent manner. In the fully reduced protein, both Cys-69 and Cys-73 are nitrosylated in response to nitric oxide (NO). When two disulfide bonds are present in the protein, only Cys-73 is nitrosylated. Cys-73 can serve as donor for nitrosylation of target proteins.

Its subcellular location is the nucleus. The protein localises to the cytoplasm. The protein resides in the secreted. Its function is as follows. Participates in various redox reactions through the reversible oxidation of its active center dithiol to a disulfide and catalyzes dithiol-disulfide exchange reactions. Plays a role in the reversible S-nitrosylation of cysteine residues in target proteins, and thereby contributes to the response to intracellular nitric oxide. Nitrosylates the active site Cys of CASP3 in response to nitric oxide (NO), and thereby inhibits caspase-3 activity. Induces the FOS/JUN AP-1 DNA binding activity in ionizing radiation (IR) cells through its oxidation/reduction status and stimulates AP-1 transcriptional activity. In Oryctolagus cuniculus (Rabbit), this protein is Thioredoxin (TXN).